Reading from the N-terminus, the 188-residue chain is PRA1 family protein 3 (188 aa).

M1 is modified (N-acetylmethionine). The Cytoplasmic segment spans residues M1–R35. 2 helical membrane passes run V36 to S56 and I57 to F77. The Cytoplasmic segment spans residues T78 to M93. The next 2 membrane-spanning stretches (helical) occupy residues K94–S114 and M115–I135. A required for homodimer formation and heterodimer formation with ARL6IP1 region spans residues M103–G117. Residues H136–E188 lie on the Cytoplasmic side of the membrane. The segment at H136–E188 is targeting to endoplasmic reticulum membrane.

The protein belongs to the PRA1 family. In terms of assembly, homodimer. Heterodimer with ARL6IP1. Forms multimers. Interacts with ARL6. Interacts with prenylated RAB1A and RAB3A. Interacts with SLC1A1/EAAC1. Interacts with RTN2 (via first transmembrane domain). Does not interact with VAMP1, VAMP2 or VAMP3.

It localises to the endoplasmic reticulum membrane. The protein resides in the cell membrane. Its subcellular location is the cytoplasm. The protein localises to the cytoskeleton. Its function is as follows. Regulates intracellular concentrations of taurine and glutamate. Negatively modulates SLC1A1/EAAC1 glutamate transport activity by decreasing its affinity for glutamate in a PKC activity-dependent manner. Plays a role in the retention of SLC1A1/EAAC1 in the endoplasmic reticulum. In Homo sapiens (Human), this protein is PRA1 family protein 3 (ARL6IP5).